The sequence spans 609 residues: Manganese lipoxygenase (609 aa).

A signal peptide spans 1 to 16; the sequence is MRLLLSIAGLTTVVNA. 4 N-linked (GlcNAc...) asparagine glycosylation sites follow: N24, N115, N156, and N193. The Lipoxygenase domain maps to 117–609; the sequence is SLKAIQDHGG…PGVIPFYLSV (493 aa). 2 residues coordinate Mn(2+): H289 and H294. N-linked (GlcNAc...) asparagine glycosylation occurs at N385. Mn(2+) is bound by residues H474 and N478. A glycan (N-linked (GlcNAc...) asparagine) is linked at N539. V609 provides a ligand contact to Mn(2+).

The protein belongs to the lipoxygenase family. Manganese lipoxygenase subfamily. Mn(2+) is required as a cofactor. In terms of processing, N- and O-glycosylated.

The protein resides in the secreted. It catalyses the reaction (9Z,12Z)-octadecadienoate + O2 = (9S)-hydroperoxy-(10E,12Z)-octadecadienoate. The catalysed reaction is (9Z,12Z)-octadecadienoate + O2 = (11S)-hydroperoxy-(9Z,12Z)-octadecadienoate. It carries out the reaction (9Z,12Z)-octadecadienoate + O2 = (13R)-hydroperoxy-(9Z,11E)-octadecadienoate. The enzyme catalyses (9Z,12Z,15Z)-octadecatrienoate + O2 = (11R)-hydroperoxy-(9Z,12Z,15Z)-octadecatrienoate. Its function is as follows. Lipoxygenase that metabolizes linoleic and alpha-linolenic acids to 9-, 11- and 13-hydroperoxy fatty acids. Oxidizes linoleic acid to mainly 9S- and 13R-HPODE and alpha-linolenic acid to 11R-HPOTrE. This is Manganese lipoxygenase from Colletotrichum gloeosporioides (strain Cg-14) (Anthracnose fungus).